The following is a 234-amino-acid chain: Adenosine 5'-phosphosulfate reductase (234 aa).

C120, C121, C203, and C206 together coordinate [4Fe-4S] cluster. Residue C229 is the Nucleophile; cysteine thiosulfonate intermediate of the active site.

It belongs to the PAPS reductase family. CysH subfamily. It depends on [4Fe-4S] cluster as a cofactor.

The protein localises to the cytoplasm. The catalysed reaction is [thioredoxin]-disulfide + sulfite + AMP + 2 H(+) = adenosine 5'-phosphosulfate + [thioredoxin]-dithiol. The protein operates within sulfur metabolism; hydrogen sulfide biosynthesis; sulfite from sulfate. Functionally, catalyzes the formation of sulfite from adenosine 5'-phosphosulfate (APS) using thioredoxin as an electron donor. The chain is Adenosine 5'-phosphosulfate reductase from Bacillus cereus (strain 03BB102).